A 699-amino-acid polypeptide reads, in one-letter code: tRNA 5-methylaminomethyl-2-thiouridine biosynthesis bifunctional protein MnmC (699 aa).

The interval 1 to 260 (MTAKPQKSCQ…ERKLLRQQAD (260 aa)) is tRNA (mnm(5)s(2)U34)-methyltransferase. The interval 282–699 (VGGGLASANL…LRKLLKGKAL (418 aa)) is FAD-dependent cmnm(5)s(2)U34 oxidoreductase.

It in the N-terminal section; belongs to the methyltransferase superfamily. tRNA (mnm(5)s(2)U34)-methyltransferase family. This sequence in the C-terminal section; belongs to the DAO family. FAD serves as cofactor.

Its subcellular location is the cytoplasm. It catalyses the reaction 5-aminomethyl-2-thiouridine(34) in tRNA + S-adenosyl-L-methionine = 5-methylaminomethyl-2-thiouridine(34) in tRNA + S-adenosyl-L-homocysteine + H(+). In terms of biological role, catalyzes the last two steps in the biosynthesis of 5-methylaminomethyl-2-thiouridine (mnm(5)s(2)U) at the wobble position (U34) in tRNA. Catalyzes the FAD-dependent demodification of cmnm(5)s(2)U34 to nm(5)s(2)U34, followed by the transfer of a methyl group from S-adenosyl-L-methionine to nm(5)s(2)U34, to form mnm(5)s(2)U34. This Shewanella sp. (strain MR-4) protein is tRNA 5-methylaminomethyl-2-thiouridine biosynthesis bifunctional protein MnmC.